The primary structure comprises 488 residues: Monothiol glutaredoxin-S17 (488 aa).

Residues 2 to 107 (SGTVKDIVSK…LANKVGKVAG (106 aa)) form the Thioredoxin domain. 3 consecutive Glutaredoxin domains span residues 154–256 (KSRL…GITT), 284–386 (RARL…GITG), and 391–488 (EDRL…TLSE). Glutathione is bound at residue Lys408. Cys416 is a [2Fe-2S] cluster binding site. Residues Arg445, Phe457, and 470-471 (CD) contribute to the glutathione site.

This sequence belongs to the glutaredoxin family. CGFS subfamily. [2Fe-2S]-bridged holo-homodimer. Interacts in vitro with SUFE1, BOLA1, BOLA2 and BOLA4. Interacts in vivo only with BOLA2. Interacts with RGLG3 and RGLG4. Post-translationally, ubiquitinated at Lys-154. Polyubiquitinated by RGLG3 and RGLG4. Polyubiquitination of GRXS17 leads to its degradation by the proteasome.

It is found in the cytoplasm. May only reduce GSH-thiol disulfides, but not protein disulfides. Participates probably to the maturation of iron-sulfur proteins and to the regulation of the redox state of the BOLA proteins. The GRXS17-BOLA2 heterodimer binds a labile, oxygen sensitive iron-sulfur cluster. This chain is Monothiol glutaredoxin-S17, found in Arabidopsis thaliana (Mouse-ear cress).